We begin with the raw amino-acid sequence, 459 residues long: Methionine aminopeptidase 2-2 (459 aa).

Residues 1 to 12 (MGSKSPEDHRQG) are compositionally biased toward basic and acidic residues. The segment at 1-87 (MGSKSPEDHR…KKLSVVQQTS (87 aa)) is disordered. The span at 43–54 (GQDEDGDDDDDE) shows a compositional bias: acidic residues. Basic and acidic residues predominate over residues 55–66 (KTGIDLKTNDGA). Positions 67-79 (KKKRKRNKKKSKK) are enriched in basic residues. His-210 lines the substrate pocket. Residues Asp-231, Asp-242, and His-311 each contribute to the a divalent metal cation site. His-319 contributes to the substrate binding site. The a divalent metal cation site is built by Glu-344 and Glu-440.

This sequence belongs to the peptidase M24A family. Methionine aminopeptidase eukaryotic type 2 subfamily. Requires Co(2+) as cofactor. It depends on Zn(2+) as a cofactor. Mn(2+) is required as a cofactor. The cofactor is Fe(2+).

Its subcellular location is the cytoplasm. The enzyme catalyses Release of N-terminal amino acids, preferentially methionine, from peptides and arylamides.. Functionally, cotranslationally removes the N-terminal methionine from nascent proteins. The N-terminal methionine is often cleaved when the second residue in the primary sequence is small and uncharged (Met-Ala-, Cys, Gly, Pro, Ser, Thr, or Val). This is Methionine aminopeptidase 2-2 from Pyrenophora teres f. teres (strain 0-1) (Barley net blotch fungus).